A 443-amino-acid polypeptide reads, in one-letter code: Packaging protein 1 (443 aa).

Residues 1 to 75 are disordered; sequence MSGAADGTVP…PEAAQPPPSR (75 aa). A compositionally biased stretch (basic and acidic residues) spans 13–56; it reads EDTHQEDSGERECEQRPVHSGREATGESDPALERPDHGERHGPE. 169–176 is a binding site for ATP; that stretch reads GPTGSGKS. The interval 433–443 is DNA-binding; the sequence is VSYANKRKWYD.

Belongs to the adenoviridae packaging protein 1 family. In terms of assembly, homodimer. Part of a genome packaging complex composed of packaging proteins 1, 2 and 3; this complex specifically binds to the packaging sequence on the left end of viral genomic DNA and performs packaging of the viral genome. Interacts with protein 33K.

The protein resides in the virion. The protein localises to the host nucleus. It is found in the host nucleoplasm. Its subcellular location is the host nucleolus. Component of the packaging machinery which encapsidates the viral DNA into preformed capsids and transcriptional activator of the viral major late promoter (MLP). Binds, along with packaging proteins 2 and 3, to the specific packaging sequence on the left end of viral genomic DNA and displays ATPase activity thereby providing the power stroke of the packaging machinery. The activity of packaging protein IVa2 is stimulated by protein 33K which acts as a terminase. May be the protein that pumps DNA into the capsid powered by ATP hydrolysis. Specifically binds to the 5'-CG-3' nucleotides of the repeats making up the packaging sequence. Component of the DEF-A and DEF-B transcription factors that bind downstream elements of the major late promoter (MLP), and stimulate transcription from the MLP after initiation of viral DNA replication. DEF-A is a heterodimer packaging proteins 1 and 2 and DEF-B is a homodimer of packaging protein 1. The polypeptide is Packaging protein 1 (Pantherophis guttatus (Corn snake)).